The following is a 437-amino-acid chain: Na(+)/H(+) antiporter NhaA (437 aa).

11 helical membrane passes run 12-32 (SMNI…AVIA), 65-85 (LTMI…MVGL), 103-123 (ALPF…YSMV), 133-153 (GLAI…SLLG), 162-182 (IFLT…IAIF), 186-206 (HVAY…YFIG), 214-234 (IFFL…GIHS), 308-328 (GAVN…VMFS), 333-353 (VIGG…FLGI), 377-397 (ISGV…IANL), and 412-432 (LGVL…LHWV).

The protein belongs to the NhaA Na(+)/H(+) (TC 2.A.33) antiporter family.

It is found in the cell inner membrane. It carries out the reaction Na(+)(in) + 2 H(+)(out) = Na(+)(out) + 2 H(+)(in). In terms of biological role, na(+)/H(+) antiporter that extrudes sodium in exchange for external protons. The polypeptide is Na(+)/H(+) antiporter NhaA (Bacteroides fragilis (strain YCH46)).